Consider the following 612-residue polypeptide: Glucoamylase (612 aa).

The first 19 residues, 1 to 19 (MVSFSSCLRALALGSSVLA), serve as a signal peptide directing secretion. Residues 20–25 (VQPVLR) constitute a propeptide that is removed on maturation. Residue Asn39 is glycosylated (N-linked (GlcNAc...) asparagine). Residue Trp146 participates in substrate binding. Asp202 serves as the catalytic Proton acceptor. Glu205 (proton donor) is an active-site residue. Disulfide bonds link Cys236–Cys239, Cys248–Cys475, and Cys288–Cys296. Residues 506 to 612 (CQVPTTVSVT…KSAVQSDVWR (107 aa)) enclose the CBM20 domain.

This sequence belongs to the glycosyl hydrolase 15 family.

The catalysed reaction is Hydrolysis of terminal (1-&gt;4)-linked alpha-D-glucose residues successively from non-reducing ends of the chains with release of beta-D-glucose.. The chain is Glucoamylase (glaA) from Aspergillus oryzae (strain ATCC 42149 / RIB 40) (Yellow koji mold).